We begin with the raw amino-acid sequence, 85 residues long: MKVTLIAILTCAAVLVLHTTAAEELEAESQLMEVGMPDTELAAVDEERLFECSVSCEIEKEGNKDCKEKKCKGGWKCKFNMCVKV.

Positions 1 to 22 (MKVTLIAILTCAAVLVLHTTAA) are cleaved as a signal peptide. Positions 23–48 (EELEAESQLMEVGMPDTELAAVDEER) are excised as a propeptide. Intrachain disulfides connect cysteine 52–cysteine 66, cysteine 56–cysteine 77, and cysteine 71–cysteine 82.

This sequence belongs to the neurotoxin 12 (Hwtx-2) family. 02 (Hwtx-2) subfamily. As to expression, expressed by the venom gland.

Its subcellular location is the secreted. Postsynaptic neurotoxin. The polypeptide is U4-theraphotoxin-Hhn1i (Cyriopagopus hainanus (Chinese bird spider)).